A 436-amino-acid chain; its full sequence is UDP-N-acetylmuramate--L-alanine ligase (436 aa).

111 to 117 is a binding site for ATP; it reads GTHGKTS.

It belongs to the MurCDEF family.

The protein resides in the cytoplasm. The enzyme catalyses UDP-N-acetyl-alpha-D-muramate + L-alanine + ATP = UDP-N-acetyl-alpha-D-muramoyl-L-alanine + ADP + phosphate + H(+). Its pathway is cell wall biogenesis; peptidoglycan biosynthesis. Its function is as follows. Cell wall formation. This is UDP-N-acetylmuramate--L-alanine ligase from Lactiplantibacillus plantarum (strain ATCC BAA-793 / NCIMB 8826 / WCFS1) (Lactobacillus plantarum).